Here is a 203-residue protein sequence, read N- to C-terminus: IQ domain-containing protein F3 (203 aa).

The span at 1 to 12 (MELDQDKKKETP) shows a compositional bias: basic and acidic residues. The tract at residues 1 to 111 (MELDQDKKKE…CETQEADRSE (111 aa)) is disordered. Positions 13–82 (EETENVNEVQ…EADKAILERS (70 aa)) form a coiled coil. The segment covering 29–38 (DEETEAEAEE) has biased composition (acidic residues). The segment covering 39–51 (ADKAILERSDSVK) has biased composition (basic and acidic residues). Acidic residues predominate over residues 64–73 (DEETEAEAEE). 2 stretches are compositionally biased toward basic and acidic residues: residues 74 to 86 (ADKA…DSVK) and 96 to 111 (QIQE…DRSE). The IQ domain occupies 129 to 158 (VMLAGVKIQAWWRGTLVRRTLLLAALNAWT).

The polypeptide is IQ domain-containing protein F3 (Iqcf3) (Mus musculus (Mouse)).